Here is a 49-residue protein sequence, read N- to C-terminus: Light-harvesting protein B-875 beta chain (49 aa).

At 2–27 (ADKSDLGYTGLTDEQAQELHSVYMSG) the chain is on the cytoplasmic side. A bacteriochlorophyll is bound by residues H21 and H39. Residues 28–45 (LWLFSAVAIVAHLAVYIW) traverse the membrane as a helical; Signal-anchor for type II membrane protein segment. Residues 46 to 49 (RPWF) lie on the Periplasmic side of the membrane.

It belongs to the antenna complex beta subunit family. The core complex is formed by different alpha and beta chains, binding bacteriochlorophyll molecules, and arranged most probably in tetrameric structures disposed around the reaction center. The non-pigmented gamma chains may constitute additional components.

It localises to the cell inner membrane. In terms of biological role, antenna complexes are light-harvesting systems, which transfer the excitation energy to the reaction centers. This Cereibacter sphaeroides (strain ATCC 17023 / DSM 158 / JCM 6121 / CCUG 31486 / LMG 2827 / NBRC 12203 / NCIMB 8253 / ATH 2.4.1.) (Rhodobacter sphaeroides) protein is Light-harvesting protein B-875 beta chain (pufB).